Here is a 145-residue protein sequence, read N- to C-terminus: Histone H2B.7 (145 aa).

The segment covering 1–30 (MAPKAEKKPAEKKPVEEKSKAEKAPAEKKP) has biased composition (basic and acidic residues). The tract at residues 1 to 53 (MAPKAEKKPAEKKPVEEKSKAEKAPAEKKPKAGKKLPKEAGAGGDKKKKMKKK) is disordered. A N,N,N-trimethylalanine; alternate modification is found at Ala-2. The residue at position 2 (Ala-2) is a N,N-dimethylalanine; alternate. Residue Ala-2 is modified to N-methylalanine; alternate. Position 4 is an N6-methyllysine; partial (Lys-4). 2 positions are modified to N6-acetyllysine: Lys-7 and Lys-12. Residue Lys-13 is modified to N6,N6-dimethyllysine. 3 positions are modified to N6-acetyllysine: Lys-23, Lys-28, and Lys-34. Residue Lys-35 is modified to N6-acetyllysine; partial. A Glycyl lysine isopeptide (Lys-Gly) (interchain with G-Cter in ubiquitin) cross-link involves residue Lys-141.

The protein belongs to the histone H2B family. The nucleosome is a histone octamer containing two molecules each of H2A, H2B, H3 and H4 assembled in one H3-H4 heterotetramer and two H2A-H2B heterodimers. The octamer wraps approximately 147 bp of DNA. In terms of processing, can be acetylated to form H2BK6ac, H2BK11ac, H2BK22ac, H2BK27ac H2BK33ac and H2BK34ac. Post-translationally, mono-, di- or trimethylated at the N-terminus to form H2BA1me1/2/3. H2BA1me2 and H2BA1me3 may be methylated and/or acetylated to form H2BA1me2K3me1, H2BA1me2K3me1K6ac, H2BA1me2K6ac H2BA1me3K6ac, H2BA1me3K6acK11ac and H2BA1me2K3me1K6acK11ac. Monoubiquitinated by BRE1 to form H2BK143ub1 and deubiquitinated by UBP26. Required for heterochromatic histone H3 di- and trimethylation at H3K4me. May give a specific tag for epigenetic transcriptional activation.

Its subcellular location is the nucleus. The protein resides in the chromosome. Functionally, core component of nucleosome. Nucleosomes wrap and compact DNA into chromatin, limiting DNA accessibility to the cellular machineries which require DNA as a template. Histones thereby play a central role in transcription regulation, DNA repair, DNA replication and chromosomal stability. DNA accessibility is regulated via a complex set of post-translational modifications of histones, also called histone code, and nucleosome remodeling. This chain is Histone H2B.7, found in Arabidopsis thaliana (Mouse-ear cress).